Here is a 103-residue protein sequence, read N- to C-terminus: Large ribosomal subunit protein bL21 (103 aa).

It belongs to the bacterial ribosomal protein bL21 family. Part of the 50S ribosomal subunit. Contacts protein L20.

This protein binds to 23S rRNA in the presence of protein L20. This Herminiimonas arsenicoxydans protein is Large ribosomal subunit protein bL21.